The following is a 981-amino-acid chain: Amidohydrolase tasK (981 aa).

A disordered region spans residues Met-1–Arg-36. Pro residues predominate over residues Pro-7 to Ala-21. A compositionally biased stretch (basic residues) spans Arg-24–Arg-36. Residues Thr-40–Trp-57 form a helical membrane-spanning segment. The tract at residues Leu-86–Gly-107 is disordered. His-187 and His-189 together coordinate Fe(2+). Positions 187 and 189 each coordinate Zn(2+). Asn-407 carries an N-linked (GlcNAc...) asparagine glycan. A disordered region spans residues Lys-819–Thr-838. Residues Lys-823–Gln-835 show a composition bias toward low complexity. Asn-891 is a glycosylation site (N-linked (GlcNAc...) asparagine).

Belongs to the metallo-dependent hydrolases superfamily. The cofactor is Fe(2+). Mn(2+) serves as cofactor. It depends on Zn(2+) as a cofactor.

Its subcellular location is the membrane. In terms of biological role, amidohydrolase; part of the gene cluster that mediates the biosynthesis of the tetramic acids Sch210971 and Sch210972, potential anti-HIV fungal natural product that contain a decalin core. The PKS module of tasS together with the enoylreductase tasC catalyze the formation of the polyketide unit which is then conjugated to 4-hydroxyl-4-methyl glutamate (HMG) by the condensation domain of the tasS NRPS module. One unique structural feature of Sch210971 and Sch210972 is the tetramic acid motif proposed to be derived from the non-proteinogenic amino acid HMG, by a Dieckmann-type condensation catalyzed by the reductase domain of tasS. The aldolase tasA catalyzes the aldol condensation of 2 molecules of pyruvic acid to yield the intermediate 4-hydroxyl-4-methyl-2-oxoglutarate (HMOG), which can then be stereoselectively transaminated, may be by tasG, to form HMG. The Diels-Alderase tas3 then uses the Dieckmann product of tasS as substrate and catalyzes the Diels-Alder cycloaddition to form the decalin ring of Sch210971 and Sch210972. This chain is Amidohydrolase tasK, found in Hapsidospora irregularis.